The following is a 71-amino-acid chain: Small ribosomal subunit protein bS21 (71 aa).

Belongs to the bacterial ribosomal protein bS21 family.

The sequence is that of Small ribosomal subunit protein bS21 from Blochmanniella floridana.